Here is a 114-residue protein sequence, read N- to C-terminus: uncharacterized protein (114 aa).

A helical membrane pass occupies residues 13–30; the sequence is LYISAAGIASIYVVKTIV.

The protein localises to the mitochondrion outer membrane. This is an uncharacterized protein from Saccharomyces cerevisiae (strain ATCC 204508 / S288c) (Baker's yeast).